The following is a 467-amino-acid chain: Replication factor C large subunit (467 aa).

Position 47–54 (47–54 (GPPGVGKT)) interacts with ATP.

The protein belongs to the activator 1 small subunits family. RfcL subfamily. In terms of assembly, heteromultimer composed of small subunits (RfcS) and large subunits (RfcL).

Functionally, part of the RFC clamp loader complex which loads the PCNA sliding clamp onto DNA. The polypeptide is Replication factor C large subunit (Methanothrix thermoacetophila (strain DSM 6194 / JCM 14653 / NBRC 101360 / PT) (Methanosaeta thermophila)).